We begin with the raw amino-acid sequence, 484 residues long: UDP-N-acetylmuramoyl-L-alanyl-D-glutamate--L-lysine ligase (484 aa).

Ser43 is a UDP-N-acetyl-alpha-D-muramoyl-L-alanyl-D-glutamate binding site. 119–125 contacts ATP; sequence GTKGKTT. UDP-N-acetyl-alpha-D-muramoyl-L-alanyl-D-glutamate contacts are provided by residues 161-162, Ser188, and Arg196; that span reads TT. The residue at position 230 (Lys230) is an N6-carboxylysine. The L-lysine recognition motif motif lies at 405-408; the sequence is DDPN.

The protein belongs to the MurCDEF family. MurE subfamily. Carboxylation is probably crucial for Mg(2+) binding and, consequently, for the gamma-phosphate positioning of ATP.

The protein localises to the cytoplasm. It carries out the reaction UDP-N-acetyl-alpha-D-muramoyl-L-alanyl-D-glutamate + L-lysine + ATP = UDP-N-acetyl-alpha-D-muramoyl-L-alanyl-gamma-D-glutamyl-L-lysine + ADP + phosphate + H(+). The protein operates within cell wall biogenesis; peptidoglycan biosynthesis. In terms of biological role, catalyzes the addition of L-lysine to the nucleotide precursor UDP-N-acetylmuramoyl-L-alanyl-D-glutamate (UMAG) in the biosynthesis of bacterial cell-wall peptidoglycan. This is UDP-N-acetylmuramoyl-L-alanyl-D-glutamate--L-lysine ligase from Streptococcus agalactiae serotype V (strain ATCC BAA-611 / 2603 V/R).